The sequence spans 243 residues: Uridylate kinase (243 aa).

12-15 contacts ATP; that stretch reads KLSG. Gly-54 lines the UMP pocket. Positions 55 and 59 each coordinate ATP. 135–142 lines the UMP pocket; it reads TGNPYFTT. 3 residues coordinate ATP: Asn-163, Tyr-169, and Asp-172.

The protein belongs to the UMP kinase family. Homohexamer.

It is found in the cytoplasm. It carries out the reaction UMP + ATP = UDP + ADP. The protein operates within pyrimidine metabolism; CTP biosynthesis via de novo pathway; UDP from UMP (UMPK route): step 1/1. Its activity is regulated as follows. Inhibited by UTP. In terms of biological role, catalyzes the reversible phosphorylation of UMP to UDP. The polypeptide is Uridylate kinase (Roseiflexus sp. (strain RS-1)).